We begin with the raw amino-acid sequence, 189 residues long: GTPase NRas (189 aa).

10-17 contacts GTP; the sequence is GAGGVGKS. An Effector region motif is present at residues 32–40; sequence YDPTIEDSY. GTP-binding positions include 57 to 61 and 116 to 119; these read DTAGQ and NKCD. The hypervariable region stretch occupies residues 166–185; it reads YRMKKLNSNEDGNQGCMGLS. C181 is lipidated: S-palmitoyl cysteine. A lipid anchor (S-farnesyl cysteine) is attached at C186. Residues 187 to 189 constitute a propeptide, removed in mature form; sequence IVM.

The protein belongs to the small GTPase superfamily. Ras family. In terms of processing, palmitoylated by the ZDHHC9-GOLGA7 complex. Depalmitoylated by ABHD17A, ABHD17B and ABHD17C. A continuous cycle of de- and re-palmitoylation regulates rapid exchange between plasma membrane and Golgi.

It is found in the cell membrane. The protein resides in the golgi apparatus membrane. The enzyme catalyses GTP + H2O = GDP + phosphate + H(+). Its activity is regulated as follows. Alternates between an inactive form bound to GDP and an active form bound to GTP. Activated by a guanine nucleotide-exchange factor (GEF) and inactivated by a GTPase-activating protein (GAP). Its function is as follows. Ras proteins bind GDP/GTP and possess intrinsic GTPase activity. The chain is GTPase NRas (NRAS) from Gallus gallus (Chicken).